A 283-amino-acid chain; its full sequence is RNase adapter protein RapZ (283 aa).

8-15 (GRSGSGKS) is a binding site for ATP. 56 to 59 (DVRN) contributes to the GTP binding site. Positions 266-283 (RARGKNVQSRHRTLEKRK) are RNA-binding.

This sequence belongs to the RapZ-like family. RapZ subfamily. In terms of assembly, homotrimer.

Its function is as follows. Modulates the synthesis of GlmS, by affecting the processing and stability of the regulatory small RNA GlmZ. When glucosamine-6-phosphate (GlcN6P) concentrations are high in the cell, RapZ binds GlmZ and targets it to cleavage by RNase E. Consequently, GlmZ is inactivated and unable to activate GlmS synthesis. Under low GlcN6P concentrations, RapZ is sequestered and inactivated by an other regulatory small RNA, GlmY, preventing GlmZ degradation and leading to synthesis of GlmS. The sequence is that of RNase adapter protein RapZ from Yersinia enterocolitica serotype O:8 / biotype 1B (strain NCTC 13174 / 8081).